A 591-amino-acid chain; its full sequence is Solute carrier family 40 member 2, chloroplastic (591 aa).

The N-terminal 66 residues, M1–D66, are a transit peptide targeting the chloroplast. Transmembrane regions (helical) follow at residues W159–F179, G206–M226, W242–V262, L293–V313, I318–N338, V391–L411, P419–I439, A452–W472, L482–V502, L518–I540, and F547–L569.

Belongs to the ferroportin (FP) (TC 2.A.100) family. SLC40A subfamily.

The protein localises to the membrane. Its subcellular location is the plastid. The protein resides in the chloroplast envelope. In terms of biological role, may be involved in iron transport and iron homeostasis. The protein is Solute carrier family 40 member 2, chloroplastic of Oryza sativa subsp. japonica (Rice).